Consider the following 693-residue polypeptide: TBC1 domain family member 12 (693 aa).

Methionine 1 is subject to N-acetylmethionine. 3 disordered regions span residues 1–57, 91–120, and 156–229; these read MMGP…EAPP, RGSG…RRTC, and AAGD…TTVR. Positions 40–49 are enriched in low complexity; the sequence is GAVAAEPPGE. The segment covering 106–115 has biased composition (basic and acidic residues); it reads QDRRGPEEAR. Residues serine 202 and serine 233 each carry the phosphoserine modification. The 209-residue stretch at 402–610 folds into the Rab-GAP TBC domain; that stretch reads GLPPSVRGKV…RVWDVFCRDG (209 aa).

Interacts with RAB11A; this interaction recruits TBC1D12 to RAB11A-positive recycling endosomes.

It localises to the endosome. In terms of biological role, RAB11A-binding protein that plays a role in neurite outgrowth. In Rattus norvegicus (Rat), this protein is TBC1 domain family member 12 (Tbc1d12).